The sequence spans 321 residues: MMQLPERVEGLHHITVATGSAQGDVDLLVKTLGQRLVKKTMFYDGARPVYHLYFGNELGEPGTLYTTFPVRQAGYTGKRGAGQISAVSYNAPVGTLSWWQEHLIKRAVTVSEVRERFGQKYLSFEHPDCGVGFEIIEQDTDGQFEPWDSPYVPKEVALRGFHSWTATLNRNEEMDSFMRNAWNLKPQGRDGNYQRYAFGNGGAAKVLDVYIDEDERPGTWALGEGQVHHAAFEVADLDVQAALKFDVEGLGYTDFSDRKHRGYFESIYVRTPGGVLFEASVTLGFTHDESPEKLGSEVKVAPQLEGVKDELLRTMNDPIVI.

2 consecutive VOC domains span residues 10–138 (GLHH…IIEQ) and 160–282 (GFHS…ASVT). His162, His229, and Glu278 together coordinate Fe cation.

It belongs to the extradiol ring-cleavage dioxygenase family. The cofactor is Fe(2+).

It carries out the reaction hydroquinone + O2 = (2E,4Z)-4-hydroxy-6-oxohexa-2,4-dienoate + H(+). The catalysed reaction is chlorohydroquinone + O2 = 5-chlorocarbonyl-4-hydroxy-penta-2,4-dienoate + H(+). The protein operates within xenobiotic degradation; gamma-hexachlorocyclohexane degradation. Functionally, cleaves aromatic rings with two hydroxyl groups at para positions with consumption of O(2). Catalyzes the cleavage of chlorohydroquinone (CHQ), as part of the gamma-hexachlorocyclohexane (gamma-HCH or lindane) degradation pathway, producing 5-chlorocarbonyl-4-hydroxy-penta-2,4-dienoate as an intermediate product that can react with water yielding maleylacetate. This degradation pathway allows S.japonicum UT26 to grow on gamma-HCH as the sole source of carbon and energy. Can also use hydroquinone (HQ) as substrate, leading to gamma-hydroxymuconic semialdehyde. Is not able to convert catechol, contrary to meta-cleavage dioxygenases. This chain is Chlorohydroquinone/hydroquinone 1,2-dioxygenase, found in Sphingobium indicum (strain DSM 16413 / CCM 7287 / MTCC 6362 / UT26 / NBRC 101211 / UT26S) (Sphingobium japonicum).